A 476-amino-acid chain; its full sequence is Aspartyl/glutamyl-tRNA(Asn/Gln) amidotransferase subunit B (476 aa).

Belongs to the GatB/GatE family. GatB subfamily. As to quaternary structure, heterotrimer of A, B and C subunits.

It carries out the reaction L-glutamyl-tRNA(Gln) + L-glutamine + ATP + H2O = L-glutaminyl-tRNA(Gln) + L-glutamate + ADP + phosphate + H(+). The catalysed reaction is L-aspartyl-tRNA(Asn) + L-glutamine + ATP + H2O = L-asparaginyl-tRNA(Asn) + L-glutamate + ADP + phosphate + 2 H(+). Functionally, allows the formation of correctly charged Asn-tRNA(Asn) or Gln-tRNA(Gln) through the transamidation of misacylated Asp-tRNA(Asn) or Glu-tRNA(Gln) in organisms which lack either or both of asparaginyl-tRNA or glutaminyl-tRNA synthetases. The reaction takes place in the presence of glutamine and ATP through an activated phospho-Asp-tRNA(Asn) or phospho-Glu-tRNA(Gln). The sequence is that of Aspartyl/glutamyl-tRNA(Asn/Gln) amidotransferase subunit B from Bacillus cytotoxicus (strain DSM 22905 / CIP 110041 / 391-98 / NVH 391-98).